Consider the following 584-residue polypeptide: Levansucrase (584 aa).

An N-terminal signal peptide occupies residues M1–A30. Q31 is subject to Pyrrolidone carboxylic acid. Sucrose-binding residues include W134, D135, S225, R308, and D309. D135 functions as the Nucleophile in the catalytic mechanism. C339 and C395 are disulfide-bonded. E401 functions as the Proton donor/acceptor in the catalytic mechanism.

Belongs to the glycosyl hydrolase 68 family. Monomer. In terms of processing, the N-terminus is blocked. The N-terminal Gln is cyclized to a pyroglutamic acid.

The protein localises to the secreted. The enzyme catalyses [6)-beta-D-fructofuranosyl-(2-&gt;](n) alpha-D-glucopyranoside + sucrose = [6)-beta-D-fructofuranosyl-(2-&gt;](n+1) alpha-D-glucopyranoside + D-glucose. Its activity is regulated as follows. Strongly inhibited by Hg(2+) and slightly activated by Co(2+). Not inhibited by the metal ion chelator EDTA, suggesting that this enzyme does not need a metal cofactor. Functionally, catalyzes the synthesis of levan, a fructose polymer, by transferring the fructosyl moiety from sucrose to a growing acceptor molecule. Also displays sucrose hydrolase activity. In vitro, catalyzes transfructosylation from sucrose to a variety of acceptors including water (sucrose hydrolysis), glucose (exchange reaction), fructan (polymerase reaction) and sucrose (oligofructoside synthesis). Levansucrase of G.diazotrophicus SRT4, unlike the enzyme of B.subtilis, causes accumulation of large quantities of tri- and tetrasaccharides but small quantities of high-molecular-mass levan. It may act more as a sucrose hydrolase than as a fructan polymerase, and may be the key enzyme in the sucrose metabolism of G.diazotrophicus SRT4. The sequence is that of Levansucrase from Gluconacetobacter diazotrophicus (Acetobacter diazotrophicus).